The chain runs to 505 residues: DEAD-box ATP-dependent RNA helicase 41 (505 aa).

The HIT-type zinc-finger motif lies at 27 to 56 (GEPKCVICSRYGEYICDETNDDVCSLECKQ). Positions 110–138 (LTFTSCGLPPKLLLNLETAGYDFPTPIQM) match the Q motif motif. The 178-residue stretch at 141–318 (IPAALTGKSL…GSLAKEIILV (178 aa)) folds into the Helicase ATP-binding domain. Residue 154 to 161 (ADTGSGKT) participates in ATP binding. A DEAD box motif is present at residues 267–270 (DEVD). In terms of domain architecture, Helicase C-terminal spans 342–492 (KKQKLFDILR…AIPKELINLT (151 aa)).

Belongs to the DEAD box helicase family. DDX59 subfamily.

It carries out the reaction ATP + H2O = ADP + phosphate + H(+). In Arabidopsis thaliana (Mouse-ear cress), this protein is DEAD-box ATP-dependent RNA helicase 41 (RH41).